The following is a 439-amino-acid chain: Microfibrillar-associated protein 1A (439 aa).

The disordered stretch occupies residues 1–200 (MSVPSALMKQ…SEDEMEPRLK (200 aa)). An N-acetylserine modification is found at serine 2. A compositionally biased stretch (basic and acidic residues) spans 23–34 (RNEKGEISMEKV). A phosphoserine mark is found at serine 52 and serine 53. Basic and acidic residues predominate over residues 61-70 (QFIKKAKEQE). Residue lysine 67 forms a Glycyl lysine isopeptide (Lys-Gly) (interchain with G-Cter in SUMO2) linkage. The segment covering 71 to 81 (AEPEEQEEDSS) has biased composition (acidic residues). A phosphoserine mark is found at serine 94, serine 116, serine 118, serine 132, and serine 133. Composition is skewed to acidic residues over residues 112 to 122 (VVGESDSEVEG) and 131 to 144 (DSSEEEEEEIDDEE). The span at 145–163 (IERRRGMMRQRAQERKNEE) shows a compositional bias: basic and acidic residues. Over residues 178–195 (ESESESEYEEYTDSEDEM) the composition is skewed to acidic residues. Lysine 249 participates in a covalent cross-link: Glycyl lysine isopeptide (Lys-Gly) (interchain with G-Cter in SUMO2). Position 267 is a phosphothreonine (threonine 267). A Glycyl lysine isopeptide (Lys-Gly) (interchain with G-Cter in SUMO2) cross-link involves residue lysine 357. At serine 361 the chain carries Phosphoserine. Glycyl lysine isopeptide (Lys-Gly) (interchain with G-Cter in SUMO2) cross-links involve residues lysine 371, lysine 381, lysine 415, and lysine 418. Serine 432 is subject to Phosphoserine.

This sequence belongs to the MFAP1 family. In terms of assembly, component of the spliceosome B complex. Interacts with PRPF38A (via N-terminal interaction domain).

Its subcellular location is the nucleus. Its function is as follows. Involved in pre-mRNA splicing as a component of the spliceosome. The polypeptide is Microfibrillar-associated protein 1A (Mus musculus (Mouse)).